The following is a 286-amino-acid chain: NAD kinase (286 aa).

Residue aspartate 66 is the Proton acceptor of the active site. NAD(+) is bound by residues 66–67 (DG), 137–138 (ND), arginine 148, arginine 165, aspartate 167, and 178–183 (TAYSMS).

Belongs to the NAD kinase family. The cofactor is a divalent metal cation.

It localises to the cytoplasm. It carries out the reaction NAD(+) + ATP = ADP + NADP(+) + H(+). Functionally, involved in the regulation of the intracellular balance of NAD and NADP, and is a key enzyme in the biosynthesis of NADP. Catalyzes specifically the phosphorylation on 2'-hydroxyl of the adenosine moiety of NAD to yield NADP. This chain is NAD kinase, found in Chlorobium chlorochromatii (strain CaD3).